The sequence spans 425 residues: Enolase (425 aa).

Q163 is a binding site for (2R)-2-phosphoglycerate. Catalysis depends on E205, which acts as the Proton donor. Residues D242, E285, and D312 each coordinate Mg(2+). Residues K337, R366, S367, and K388 each coordinate (2R)-2-phosphoglycerate. The Proton acceptor role is filled by K337.

It belongs to the enolase family. Mg(2+) is required as a cofactor.

The protein resides in the cytoplasm. Its subcellular location is the secreted. The protein localises to the cell surface. The catalysed reaction is (2R)-2-phosphoglycerate = phosphoenolpyruvate + H2O. It participates in carbohydrate degradation; glycolysis; pyruvate from D-glyceraldehyde 3-phosphate: step 4/5. Functionally, catalyzes the reversible conversion of 2-phosphoglycerate (2-PG) into phosphoenolpyruvate (PEP). It is essential for the degradation of carbohydrates via glycolysis. This Cereibacter sphaeroides (strain ATCC 17029 / ATH 2.4.9) (Rhodobacter sphaeroides) protein is Enolase.